The following is a 264-amino-acid chain: uncharacterized protein (264 aa).

NADP(+) is bound at residue 13–20 (TGSTSGIG). Serine 141 contributes to the substrate binding site. Catalysis depends on tyrosine 154, which acts as the Proton acceptor.

Belongs to the short-chain dehydrogenases/reductases (SDR) family.

This is an uncharacterized protein from Bacillus subtilis (strain 168).